The following is a 152-amino-acid chain: UPF0178 protein KPN78578_03210 (152 aa).

Belongs to the UPF0178 family.

This is UPF0178 protein KPN78578_03210 from Klebsiella pneumoniae subsp. pneumoniae (strain ATCC 700721 / MGH 78578).